Consider the following 506-residue polypeptide: Cobyric acid synthase (506 aa).

One can recognise a GATase cobBQ-type domain in the interval 251–448 (DIDIAVVQVP…LHGLFDSDAF (198 aa)). C332 functions as the Nucleophile in the catalytic mechanism. The active site involves H440.

The protein belongs to the CobB/CobQ family. CobQ subfamily.

Its pathway is cofactor biosynthesis; adenosylcobalamin biosynthesis. Functionally, catalyzes amidations at positions B, D, E, and G on adenosylcobyrinic A,C-diamide. NH(2) groups are provided by glutamine, and one molecule of ATP is hydrogenolyzed for each amidation. The polypeptide is Cobyric acid synthase (Citrobacter koseri (strain ATCC BAA-895 / CDC 4225-83 / SGSC4696)).